The primary structure comprises 597 residues: Coronatine-insensitive protein homolog 1b (597 aa).

Positions 22–64 (SIPEEALHLVLGYVDDPRDREAVSLVCRRWHRIDALTRKHVTV) constitute an F-box domain. Residues R92, R353, Y391, R414, and R501 each contribute to the jasmonate site.

As to quaternary structure, interacts with TIFY10C/JAZ8 in a coronatine-dependent manner. Interacts with TIFY3/JAZ1, TIFY6A/JAZ3, TIFY6B/JAZ4, TIFY10A/JAZ6, TIFY10B/JAZ7, TIFY11A/JAZ9, TIFY11B/JAZ10, TIFY11C/JAZ11 and TIFY11D/JAZ12 in a coronatine-dependent manner. Expressed in roots, shoots, leaf sheaths and leaf blades.

In terms of biological role, involved in jasmonate (JA) signaling. Required for jasmonate signaling in plant defense responses. Can complement Arabidopsis coi1-1 mutant and restore jasmonate signaling. Component of SCF(COI1) E3 ubiquitin ligase complexes, which may mediate the ubiquitination and subsequent proteasomal degradation of target proteins, including TIFY/JAZ family. This Oryza sativa subsp. japonica (Rice) protein is Coronatine-insensitive protein homolog 1b.